Consider the following 282-residue polypeptide: Pyridoxal 5'-phosphate synthase subunit PdxS (282 aa).

Position 14 (Asp14) interacts with D-ribose 5-phosphate. Lys71 acts as the Schiff-base intermediate with D-ribose 5-phosphate in catalysis. Gly143 contributes to the D-ribose 5-phosphate binding site. Residue Arg155 coordinates D-glyceraldehyde 3-phosphate. D-ribose 5-phosphate contacts are provided by residues Gly204 and 225 to 226 (GS).

This sequence belongs to the PdxS/SNZ family. In terms of assembly, in the presence of PdxT, forms a dodecamer of heterodimers.

The enzyme catalyses aldehydo-D-ribose 5-phosphate + D-glyceraldehyde 3-phosphate + L-glutamine = pyridoxal 5'-phosphate + L-glutamate + phosphate + 3 H2O + H(+). It participates in cofactor biosynthesis; pyridoxal 5'-phosphate biosynthesis. Its function is as follows. Catalyzes the formation of pyridoxal 5'-phosphate from ribose 5-phosphate (RBP), glyceraldehyde 3-phosphate (G3P) and ammonia. The ammonia is provided by the PdxT subunit. Can also use ribulose 5-phosphate and dihydroxyacetone phosphate as substrates, resulting from enzyme-catalyzed isomerization of RBP and G3P, respectively. In Treponema denticola (strain ATCC 35405 / DSM 14222 / CIP 103919 / JCM 8153 / KCTC 15104), this protein is Pyridoxal 5'-phosphate synthase subunit PdxS.